Consider the following 142-residue polypeptide: Large ribosomal subunit protein uL13 (142 aa).

The protein belongs to the universal ribosomal protein uL13 family. In terms of assembly, part of the 50S ribosomal subunit.

In terms of biological role, this protein is one of the early assembly proteins of the 50S ribosomal subunit, although it is not seen to bind rRNA by itself. It is important during the early stages of 50S assembly. This is Large ribosomal subunit protein uL13 from Ectopseudomonas mendocina (strain ymp) (Pseudomonas mendocina).